Consider the following 339-residue polypeptide: 2-halobenzoate 1,2-dioxygenase electron transfer component (339 aa).

Residues 3–96 (HSIALRFEDD…DCVVRILASS (94 aa)) enclose the 2Fe-2S ferredoxin-type domain. Residues C40, C45, C48, and C80 each contribute to the [2Fe-2S] cluster site. The tract at residues 98 to 336 (ACQVKKSTMT…NFYFEKFAPT (239 aa)) is ferredoxin-reductase. In terms of domain architecture, FAD-binding FR-type spans 103 to 203 (KSTMTGQMTE…DGPYGAFYLR (101 aa)).

The protein belongs to the bacterial ring-hydroxylating dioxygenase ferredoxin reductase family. In terms of assembly, monomer. It is part of 2-halobenzoate dioxygenase two component enzyme system. The other component is a dioxygenase component consisting of 3 large (CbdA) subunits and 3 small (CbdB) subunits. The cofactor is FAD. It depends on [2Fe-2S] cluster as a cofactor.

The enzyme catalyses 2 reduced [2Fe-2S]-[ferredoxin] + NAD(+) + H(+) = 2 oxidized [2Fe-2S]-[ferredoxin] + NADH. It functions in the pathway xenobiotic degradation; benzoate degradation via CoA ligation. Its function is as follows. Electron transfer component of 2-halobenzoate 1,2-dioxygenase system. This Burkholderia cepacia (Pseudomonas cepacia) protein is 2-halobenzoate 1,2-dioxygenase electron transfer component (cbdC).